The primary structure comprises 342 residues: S-adenosylmethionine:tRNA ribosyltransferase-isomerase (342 aa).

Belongs to the QueA family. As to quaternary structure, monomer.

Its subcellular location is the cytoplasm. The catalysed reaction is 7-aminomethyl-7-carbaguanosine(34) in tRNA + S-adenosyl-L-methionine = epoxyqueuosine(34) in tRNA + adenine + L-methionine + 2 H(+). The protein operates within tRNA modification; tRNA-queuosine biosynthesis. Its function is as follows. Transfers and isomerizes the ribose moiety from AdoMet to the 7-aminomethyl group of 7-deazaguanine (preQ1-tRNA) to give epoxyqueuosine (oQ-tRNA). This is S-adenosylmethionine:tRNA ribosyltransferase-isomerase from Streptococcus pyogenes serotype M12 (strain MGAS2096).